A 136-amino-acid chain; its full sequence is uncharacterized protein (136 aa).

Widely expressed.

This is an uncharacterized protein from Homo sapiens (Human).